Consider the following 405-residue polypeptide: L-rhamnonate dehydratase (405 aa).

Residues His-33 and Arg-59 each contribute to the substrate site. Positions 226, 252, and 280 each coordinate Mg(2+). The active-site Proton acceptor is His-329. Glu-349 lines the substrate pocket.

Belongs to the mandelate racemase/muconate lactonizing enzyme family. RhamD subfamily. As to quaternary structure, homooctamer; tetramer of dimers. Requires Mg(2+) as cofactor.

The enzyme catalyses L-rhamnonate = 2-dehydro-3-deoxy-L-rhamnonate + H2O. In terms of biological role, catalyzes the dehydration of L-rhamnonate to 2-keto-3-deoxy-L-rhamnonate (KDR). The polypeptide is L-rhamnonate dehydratase (Shigella boydii serotype 4 (strain Sb227)).